We begin with the raw amino-acid sequence, 335 residues long: MVRRDRLRRMREWWVQVGLLAVPLLAAYLHIPPPQLSPALHSWKSSGKFFTYKGLRIFYQDSVGVVGSPEIVVLLHGFPTSSYDWYKIWEGLTLSFHRVIALDFLGFGFSDKPRPHHYSIFEQASIVEALLRHLGLQSRRINLLSHDYGDTVAQELLYRFKQNRSGRLTIKSLCLSNGGIFPETHRPLLLQKLLKDGGMLSPILTRLMNFFVFSRGLTPVFGPYTRPSESELWDMWAGIRNNDGNLVIDSLLQYINQRKKFRRRWVGALASVSIPIHFIYGPLDPVNPYPEFLELYRKTLPRSTVSILDDHISHYPQLEDPMGFLNAYMGFINSF.

3 consecutive transmembrane segments (helical) span residues Trp13–Pro33, Ile88–Gly108, and Val266–Val286. The AB hydrolase-1 domain occupies Ile71–Asp310. The RVIALD signature appears at Arg98 to Asp103.

The protein belongs to the AB hydrolase superfamily. In terms of tissue distribution, no detectable transcripts during preimplantation development. Isoform 1 was not detected in either in vitro-matured oocytes (IVF) or parthenogenetically activated (PA) blastocyst. Isoform 2 was expressed in IVF and PA blastocysts.

It is found in the endoplasmic reticulum membrane. The polypeptide is Mesoderm-specific transcript homolog protein (MEST) (Bos taurus (Bovine)).